The following is a 270-amino-acid chain: Interleukin-1 alpha (270 aa).

The propeptide occupies 1 to 112; sequence MAKVPDLFED…DTEEEIIKPR (112 aa). Lysine 82 bears the N6-acetyllysine mark. The interval 82–86 is nuclear localization signal (NLS); the sequence is KKRRL. Serine 87 carries the post-translational modification Phosphoserine. Residues asparagine 102 and asparagine 141 are each glycosylated (N-linked (GlcNAc...) asparagine).

The protein belongs to the IL-1 family. Monomer. Interacts with TMED10; the interaction mediates the translocation from the cytoplasm into the ERGIC (endoplasmic reticulum-Golgi intermediate compartment) and thereby secretion. Interacts with IL1R1. Interacts with S100A13; this interaction is the first step in the export of IL1A, followed by direct translocation of this complex across the plasma membrane. Acetylated within its nuclear localization sequence, which impacts subcellular localization. In terms of processing, proteolytic processed by CAPN1 in a calcium-dependent manner. Cleavage from 31 kDa precursor to 18 kDa biologically active molecules. Post-translationally, phosphorylated. Phosphorylation greatly enhances susceptibility to digestion and promotes the conversion of pre-IL1A alpha to the biologically active IL1A.

The protein localises to the nucleus. It localises to the cytoplasm. It is found in the secreted. Cytokine constitutively present intracellularly in nearly all resting non-hematopoietic cells that plays an important role in inflammation and bridges the innate and adaptive immune systems. After binding to its receptor IL1R1 together with its accessory protein IL1RAP, forms the high affinity interleukin-1 receptor complex. Signaling involves the recruitment of adapter molecules such as MYD88, IRAK1 or IRAK4. In turn, mediates the activation of NF-kappa-B and the three MAPK pathways p38, p42/p44 and JNK pathways. Within the cell, acts as an alarmin and cell death results in its liberation in the extracellular space after disruption of the cell membrane to induce inflammation and alert the host to injury or damage. In addition to its role as a danger signal, which occurs when the cytokine is passively released by cell necrosis, directly senses DNA damage and acts as signal for genotoxic stress without loss of cell integrity. The protein is Interleukin-1 alpha (IL1A) of Sus scrofa (Pig).